Here is a 151-residue protein sequence, read N- to C-terminus: UPF0179 protein MJ1627 (151 aa).

Belongs to the UPF0179 family.

This chain is UPF0179 protein MJ1627, found in Methanocaldococcus jannaschii (strain ATCC 43067 / DSM 2661 / JAL-1 / JCM 10045 / NBRC 100440) (Methanococcus jannaschii).